The sequence spans 280 residues: Bifunctional protein FolD (280 aa).

NADP(+) is bound by residues 161 to 163 (GRS), serine 186, and isoleucine 227.

It belongs to the tetrahydrofolate dehydrogenase/cyclohydrolase family. Homodimer.

The catalysed reaction is (6R)-5,10-methylene-5,6,7,8-tetrahydrofolate + NADP(+) = (6R)-5,10-methenyltetrahydrofolate + NADPH. The enzyme catalyses (6R)-5,10-methenyltetrahydrofolate + H2O = (6R)-10-formyltetrahydrofolate + H(+). It participates in one-carbon metabolism; tetrahydrofolate interconversion. Functionally, catalyzes the oxidation of 5,10-methylenetetrahydrofolate to 5,10-methenyltetrahydrofolate and then the hydrolysis of 5,10-methenyltetrahydrofolate to 10-formyltetrahydrofolate. The polypeptide is Bifunctional protein FolD (Caldanaerobacter subterraneus subsp. tengcongensis (strain DSM 15242 / JCM 11007 / NBRC 100824 / MB4) (Thermoanaerobacter tengcongensis)).